The chain runs to 240 residues: Proteasome subunit alpha (240 aa).

The protein belongs to the peptidase T1A family. As to quaternary structure, the 20S proteasome core is composed of 14 alpha and 14 beta subunits that assemble into four stacked heptameric rings, resulting in a barrel-shaped structure. The two inner rings, each composed of seven catalytic beta subunits, are sandwiched by two outer rings, each composed of seven alpha subunits. The catalytic chamber with the active sites is on the inside of the barrel. Has a gated structure, the ends of the cylinder being occluded by the N-termini of the alpha-subunits. Is capped by the proteasome-associated ATPase, ARC.

The protein localises to the cytoplasm. It functions in the pathway protein degradation; proteasomal Pup-dependent pathway. Its activity is regulated as follows. The formation of the proteasomal ATPase ARC-20S proteasome complex, likely via the docking of the C-termini of ARC into the intersubunit pockets in the alpha-rings, may trigger opening of the gate for substrate entry. Interconversion between the open-gate and close-gate conformations leads to a dynamic regulation of the 20S proteasome proteolysis activity. In terms of biological role, component of the proteasome core, a large protease complex with broad specificity involved in protein degradation. The polypeptide is Proteasome subunit alpha (Frankia casuarinae (strain DSM 45818 / CECT 9043 / HFP020203 / CcI3)).